The primary structure comprises 348 residues: Rhodopsin (348 aa).

M1 carries the N-acetylmethionine modification. The Extracellular portion of the chain corresponds to 1-36 (MNGTEGPNFYVPFSNKTGVVRSPFEYPQYYLAEPWQ). N-linked (GlcNAc...) asparagine glycans are attached at residues N2 and N15. Residues 37 to 61 (FSMLAAYMFLLIVLGFPINFLTLYV) form a helical membrane-spanning segment. Residues 62–73 (TVQHKKLRTPLN) lie on the Cytoplasmic side of the membrane. Residues 74 to 96 (YILLNLAVADLFMVFGGFTTTLY) form a helical membrane-spanning segment. The Extracellular segment spans residues 97-110 (TSLHGYFVFGPTGC). C110 and C187 are disulfide-bonded. A helical transmembrane segment spans residues 111–133 (NVEGFFATLGGEIALWSLVVLAI). A 'Ionic lock' involved in activated form stabilization motif is present at residues 134–136 (ERY). Residues 134–152 (ERYVVVCKPMSNFRFGENH) are Cytoplasmic-facing. The chain crosses the membrane as a helical span at residues 153 to 173 (AIMGVAFTWVMALACAAPPLA). Topologically, residues 174–202 (GWSRYIPEGMQCSCGIDYYTLKPEINNES) are extracellular. Position 201 (E201) interacts with Zn(2+). The helical transmembrane segment at 203-224 (FVIYMFVVHFAIPMIVIFFCYG) threads the bilayer. Over 225–252 (QLVFTVKEAAAQQQESATTQKAEKEVTR) the chain is Cytoplasmic. Residues 253 to 274 (MVIIMVIAFLICWVPYASVAFY) traverse the membrane as a helical segment. The Extracellular segment spans residues 275-286 (IFTHQGSDFGPI). Q279 lines the Zn(2+) pocket. A helical membrane pass occupies residues 287–308 (FMTLPAFFAKSSSIYNPVIYIM). Residue K296 is modified to N6-(retinylidene)lysine. Residues 309-348 (MNKQFRNCMITTLCCGKNPLGDDEASASASKTETSQVAPA) lie on the Cytoplasmic side of the membrane. S-palmitoyl cysteine attachment occurs at residues C322 and C323. The tract at residues 330–348 (DDEASASASKTETSQVAPA) is interaction with SAG. S334 and S338 each carry phosphoserine. 2 positions are modified to phosphothreonine: T340 and T342. Position 343 is a phosphoserine (S343).

This sequence belongs to the G-protein coupled receptor 1 family. Opsin subfamily. As to quaternary structure, homodimer. May form a complex composed of RHO, GRK1 and RCVRN in a Ca(2+)-dependent manner; RCVRN prevents the interaction between GRK1 and RHO. Interacts with GRK1. Interacts (phosphorylated form) with SAG. Interacts with GNAT1. Interacts with GNAT3. SAG and G-proteins compete for a common binding site. Interacts with PRCD; the interaction promotes PRCD stability. Forms a complex with ASAP1 and ARF4. Forms a complex with ASAP1, RAB11A, Rabin8/RAB3IP, ARF4 and RAB11FIP3; the complex regulates Golgi-to-cilia rhodopsin/RHO transport in photoreceptors. Phosphorylated on some or all of the serine and threonine residues present in the C-terminal region. Post-translationally, contains one covalently linked retinal chromophore. Upon light absorption, the covalently bound 11-cis-retinal is converted to all-trans-retinal. After hydrolysis of the Schiff base and release of the covalently bound all-trans-retinal, active rhodopsin is regenerated by binding of a fresh molecule of 11-cis-retinal.

The protein localises to the membrane. The protein resides in the cell projection. It is found in the cilium. It localises to the photoreceptor outer segment. In terms of biological role, photoreceptor required for image-forming vision at low light intensity. Required for photoreceptor cell viability after birth. Light-induced isomerization of 11-cis to all-trans retinal triggers a conformational change that activates signaling via G-proteins. Subsequent receptor phosphorylation mediates displacement of the bound G-protein alpha subunit by the arrestin SAG and terminates signaling. The chain is Rhodopsin (RHO) from Canis lupus familiaris (Dog).